The following is a 548-amino-acid chain: Frizzled-7 (548 aa).

The first 19 residues, 1–19 (MFATVSLLFCLLLQPSPSA), serve as a signal peptide directing secretion. Over 20–230 (QQYHGEKGIS…EEEVRFARLW (211 aa)) the chain is Extracellular. Residues 31 to 150 (PDHGFCQPIS…HGAGEICVGQ (120 aa)) enclose the FZ domain. Cystine bridges form between Cys36–Cys97, Cys44–Cys90, Cys81–Cys118, Cys107–Cys147, and Cys111–Cys135. The N-linked (GlcNAc...) asparagine glycan is linked to Asn50. N-linked (GlcNAc...) asparagine glycosylation is present at Asn151. The helical transmembrane segment at 231–251 (VGIWAILCGISTLFTVLTYLV) threads the bilayer. Residues 252-262 (DMRRFSYPERP) lie on the Cytoplasmic side of the membrane. A helical membrane pass occupies residues 263–283 (IIFLSGCYFMVAVAYTAGFLL). The Extracellular segment spans residues 284–310 (EERGVCVERFSEDSYRTVAQGTKKEGC). A helical membrane pass occupies residues 311–331 (TILFMILYFFGMASSIWWVIL). The Cytoplasmic segment spans residues 332-353 (SLTWFLAAGMKWGHEAIEANSQ). A helical transmembrane segment spans residues 354–374 (YFHLAAWAVPAVKTITILAMG). Residues 375 to 397 (QVDGDILSGVCYVGINSVDSLRG) lie on the Extracellular side of the membrane. The helical transmembrane segment at 398-418 (FVLAPLFVYLFIGTSFLLAGF) threads the bilayer. Over 419–444 (VSLFRIRTIMKHDGTKTEKLEKLMVR) the chain is Cytoplasmic. Residues 445–465 (IGVFSVMYTVPATIVLACYFY) traverse the membrane as a helical segment. Residues 466–502 (EQAFRDTWEKTWLVQTCKGFAVPCPNYNFAPMSPDFT) lie on the Extracellular side of the membrane. A helical transmembrane segment spans residues 503–523 (VFMIKYLMTMIVGITSSFWIW). Residues 524–548 (SGKTLQSWRRFYHRLSNGGKGETAV) lie on the Cytoplasmic side of the membrane. Positions 526-531 (KTLQSW) match the Lys-Thr-X-X-X-Trp motif, mediates interaction with the PDZ domain of Dvl family members motif. The PDZ-binding signature appears at 546–548 (TAV).

It belongs to the G-protein coupled receptor Fz/Smo family. Interacts with wnt11 and sdc4. The extracellular domain interacts with the extracellular domain of pcdh8/papc.

It localises to the cell membrane. The protein resides in the endosome membrane. Its function is as follows. Receptor for Wnt proteins. Acts in both canonical and non-canonical Wnt pathways. Although different papers report differing Wnt preferences, wnt5a, wnt8b and wnt11 have been proposed as synergists. In the canonical Wnt pathway, acts via beta-catenin to promote the expression of the dorsal genes siamois, twin and nodal3 and to establish the dorsal axis of the embryo and induce dorsal mesoderm formation. In a non-canonical Wnt/planar cell polarity (PCP) pathway, acts with sdc4 and dvl2/dsh to regulate convergent extension movements in gastrulation. Triggers phosphorylation of dvl2/dsh and its translocation to the plasma membrane. In a third branch of Wnt signaling, acts in a non-canonical pathway via trimeric G proteins, and independently of dvl2/dsh, to recruit protein kinase C (PKC) to the membrane and thus activate PKC. PKC signaling controls cell sorting and tissue separation during gastrulation. This is Frizzled-7 from Xenopus tropicalis (Western clawed frog).